Here is a 200-residue protein sequence, read N- to C-terminus: Transcription elongation factor A protein-like 6 (200 aa).

The disordered stretch occupies residues 1–200; sequence MEKPYNKNEG…QRGLHDIPYL (200 aa). Positions 20–36 are enriched in acidic residues; that stretch reads DEVEPDDEGKSDEEEKP. Ser-30 carries the post-translational modification Phosphoserine. Basic and acidic residues-rich tracts occupy residues 37–52, 60–80, and 115–154; these read DAEG…KAEG, LEDK…KPQG, and DRGT…EELR. Phosphoserine is present on Ser-65.

It belongs to the TFS-II family. TFA subfamily.

Its subcellular location is the nucleus. May be involved in transcriptional regulation. This Homo sapiens (Human) protein is Transcription elongation factor A protein-like 6 (TCEAL6).